We begin with the raw amino-acid sequence, 472 residues long: Alkaline phosphatase (472 aa).

The N-terminal stretch at 1–21 (MKQSAIALALLSCLITPVSQA) is a signal peptide. Aspartate 74 contacts Mg(2+). Zn(2+) is bound at residue aspartate 74. Residue serine 125 is the Phosphoserine intermediate of the active site. Positions 176 and 178 each coordinate Mg(2+). 2 disulfides stabilise this stretch: cysteine 191–cysteine 201 and cysteine 309–cysteine 359. Glutamate 345 contributes to the Mg(2+) binding site. Aspartate 350, histidine 354, aspartate 392, histidine 393, and histidine 435 together coordinate Zn(2+).

It belongs to the alkaline phosphatase family. Homodimer. Mg(2+) is required as a cofactor. The cofactor is Zn(2+).

The protein resides in the periplasm. It catalyses the reaction a phosphate monoester + H2O = an alcohol + phosphate. The sequence is that of Alkaline phosphatase (phoA) from Escherichia fergusonii (strain ATCC 35469 / DSM 13698 / CCUG 18766 / IAM 14443 / JCM 21226 / LMG 7866 / NBRC 102419 / NCTC 12128 / CDC 0568-73).